Here is a 155-residue protein sequence, read N- to C-terminus: Small ribosomal subunit protein uS7cz/uS7cy (155 aa).

Belongs to the universal ribosomal protein uS7 family. Part of the 30S ribosomal subunit.

It is found in the plastid. Its subcellular location is the chloroplast. Functionally, one of the primary rRNA binding proteins, it binds directly to 16S rRNA where it nucleates assembly of the head domain of the 30S subunit. The polypeptide is Small ribosomal subunit protein uS7cz/uS7cy (rps7-A) (Psilotum nudum (Whisk fern)).